The sequence spans 537 residues: Probable glucomannan 4-beta-mannosyltransferase 15 (537 aa).

A helical membrane pass occupies residues 50 to 70 (FIVPLFKCIVVMCLIISLLVF). Residue Asp-150 is part of the active site. Residues Asp-209 and Asp-211 each contribute to the substrate site. Asp-303 is an active-site residue. 4 consecutive transmembrane segments (helical) span residues 382–402 (IVVH…SVFL), 418–438 (VITL…IFWV), 494–514 (EMMM…FGNA), and 515–535 (FLYL…VGFV).

It belongs to the glycosyltransferase 2 family. Plant cellulose synthase-like A subfamily.

It localises to the golgi apparatus membrane. It catalyses the reaction GDP-mannose + (glucomannan)n = GDP + (glucomannan)n+1.. Functionally, probable mannan synthase which consists of a 4-beta-mannosyltransferase activity on mannan using GDP-mannose. The beta-1,4-mannan product is the backbone for galactomannan synthesis by galactomannan galactosyltransferase. Galactomannan is a noncellulosic polysaccharides of plant cell wall. In Arabidopsis thaliana (Mouse-ear cress), this protein is Probable glucomannan 4-beta-mannosyltransferase 15.